A 487-amino-acid chain; its full sequence is Glucose starvation modulator protein 1 (487 aa).

The tract at residues 1–75 is disordered; that stretch reads MSIRFPEIPG…KRLTPQEKKA (75 aa). Residues 59-68 show a composition bias toward polar residues; sequence SFSSSMTKRL. Positions 83 to 111 form a DNA-binding region, zn(2)-C6 fungal-type; that stretch reads CVFCHSKHLQCSHSRPCQNCIKRNLAHEC. Residues 122 to 139 show a composition bias toward polar residues; the sequence is MSTTEVPAVSGESSSESG. Residues 122 to 158 form a disordered region; that stretch reads MSTTEVPAVSGESSSESGRATGENGSEMGNPPDPQIA. Residues 348–420 enclose the PAS domain; that stretch reads CLLDYENLSR…FRLFESVAVG (73 aa).

It belongs to the ERT1/acuK family.

The protein resides in the nucleus. Its function is as follows. Transcription factor which regulates nonfermentable carbon utilization. In Clavispora lusitaniae (strain ATCC 42720) (Yeast), this protein is Glucose starvation modulator protein 1 (GSM1).